We begin with the raw amino-acid sequence, 245 residues long: 1-(5-phosphoribosyl)-5-[(5-phosphoribosylamino)methylideneamino] imidazole-4-carboxamide isomerase (245 aa).

Asp-7 acts as the Proton acceptor in catalysis. Asp-129 acts as the Proton donor in catalysis.

It belongs to the HisA/HisF family.

The protein localises to the cytoplasm. It catalyses the reaction 1-(5-phospho-beta-D-ribosyl)-5-[(5-phospho-beta-D-ribosylamino)methylideneamino]imidazole-4-carboxamide = 5-[(5-phospho-1-deoxy-D-ribulos-1-ylimino)methylamino]-1-(5-phospho-beta-D-ribosyl)imidazole-4-carboxamide. The protein operates within amino-acid biosynthesis; L-histidine biosynthesis; L-histidine from 5-phospho-alpha-D-ribose 1-diphosphate: step 4/9. This Escherichia coli (strain 55989 / EAEC) protein is 1-(5-phosphoribosyl)-5-[(5-phosphoribosylamino)methylideneamino] imidazole-4-carboxamide isomerase.